A 211-amino-acid polypeptide reads, in one-letter code: Pyridoxine/pyridoxamine 5'-phosphate oxidase (211 aa).

Substrate is bound by residues 8-11 (RNEY) and Lys-66. FMN-binding positions include 61–66 (RVVLLK), 76–77 (FT), Lys-83, and Gln-105. Positions 123, 127, and 131 each coordinate substrate. FMN-binding positions include 140-141 (QS) and Trp-184. A substrate-binding site is contributed by 190 to 192 (RLH). Arg-194 is an FMN binding site.

The protein belongs to the pyridoxamine 5'-phosphate oxidase family. Homodimer. FMN is required as a cofactor.

It catalyses the reaction pyridoxamine 5'-phosphate + O2 + H2O = pyridoxal 5'-phosphate + H2O2 + NH4(+). The enzyme catalyses pyridoxine 5'-phosphate + O2 = pyridoxal 5'-phosphate + H2O2. It participates in cofactor metabolism; pyridoxal 5'-phosphate salvage; pyridoxal 5'-phosphate from pyridoxamine 5'-phosphate: step 1/1. Its pathway is cofactor metabolism; pyridoxal 5'-phosphate salvage; pyridoxal 5'-phosphate from pyridoxine 5'-phosphate: step 1/1. Its function is as follows. Catalyzes the oxidation of either pyridoxine 5'-phosphate (PNP) or pyridoxamine 5'-phosphate (PMP) into pyridoxal 5'-phosphate (PLP). This is Pyridoxine/pyridoxamine 5'-phosphate oxidase from Mannheimia succiniciproducens (strain KCTC 0769BP / MBEL55E).